Consider the following 455-residue polypeptide: C4-dicarboxylate transport protein (455 aa).

Helical transmembrane passes span 20–40 (HLYF…HFYP), 59–79 (MIIA…MGTL), 91–111 (GYFL…ANVI), 160–180 (GNIL…ILIG), 209–229 (PIGA…ASVV), 231–251 (LATL…VVLG), 344–364 (LLLV…AGFI), and 367–387 (AATL…ILGV).

It belongs to the dicarboxylate/amino acid:cation symporter (DAACS) (TC 2.A.23) family.

The protein resides in the cell inner membrane. Functionally, responsible for the transport of dicarboxylates such as succinate, fumarate, and malate from the periplasm across the membrane. The sequence is that of C4-dicarboxylate transport protein from Paracoccus denitrificans (strain Pd 1222).